The sequence spans 183 residues: Endoribonuclease YbeY (183 aa).

The Zn(2+) site is built by H140, H144, and H150.

This sequence belongs to the endoribonuclease YbeY family. Zn(2+) is required as a cofactor.

The protein resides in the cytoplasm. Its function is as follows. Single strand-specific metallo-endoribonuclease involved in late-stage 70S ribosome quality control and in maturation of the 3' terminus of the 16S rRNA. The polypeptide is Endoribonuclease YbeY (Bradyrhizobium diazoefficiens (strain JCM 10833 / BCRC 13528 / IAM 13628 / NBRC 14792 / USDA 110)).